A 212-amino-acid chain; its full sequence is Pyridoxine/pyridoxamine 5'-phosphate oxidase (212 aa).

Residues 61–66 (RTVLLK), 76–77 (FT), K82, K83, and Q105 contribute to the FMN site. Substrate is bound at residue K66. Y123, R127, and S131 together coordinate substrate. FMN is bound by residues 140-141 (QS) and W185. 191–193 (RLH) is a substrate binding site. R195 contacts FMN.

Belongs to the pyridoxamine 5'-phosphate oxidase family. As to quaternary structure, homodimer. FMN is required as a cofactor.

It catalyses the reaction pyridoxamine 5'-phosphate + O2 + H2O = pyridoxal 5'-phosphate + H2O2 + NH4(+). It carries out the reaction pyridoxine 5'-phosphate + O2 = pyridoxal 5'-phosphate + H2O2. Its pathway is cofactor metabolism; pyridoxal 5'-phosphate salvage; pyridoxal 5'-phosphate from pyridoxamine 5'-phosphate: step 1/1. The protein operates within cofactor metabolism; pyridoxal 5'-phosphate salvage; pyridoxal 5'-phosphate from pyridoxine 5'-phosphate: step 1/1. In terms of biological role, catalyzes the oxidation of either pyridoxine 5'-phosphate (PNP) or pyridoxamine 5'-phosphate (PMP) into pyridoxal 5'-phosphate (PLP). This Vesicomyosocius okutanii subsp. Calyptogena okutanii (strain HA) protein is Pyridoxine/pyridoxamine 5'-phosphate oxidase.